Reading from the N-terminus, the 421-residue chain is UDP-N-acetylglucosamine 1-carboxyvinyltransferase (421 aa).

22–23 is a phosphoenolpyruvate binding site; that stretch reads KN. UDP-N-acetyl-alpha-D-glucosamine is bound at residue Arg-94. Catalysis depends on Cys-118, which acts as the Proton donor. Cys-118 is subject to 2-(S-cysteinyl)pyruvic acid O-phosphothioketal. UDP-N-acetyl-alpha-D-glucosamine is bound by residues 163–166, Asp-308, and Ile-330; that span reads KVSV.

The protein belongs to the EPSP synthase family. MurA subfamily.

Its subcellular location is the cytoplasm. It carries out the reaction phosphoenolpyruvate + UDP-N-acetyl-alpha-D-glucosamine = UDP-N-acetyl-3-O-(1-carboxyvinyl)-alpha-D-glucosamine + phosphate. It participates in cell wall biogenesis; peptidoglycan biosynthesis. Functionally, cell wall formation. Adds enolpyruvyl to UDP-N-acetylglucosamine. The chain is UDP-N-acetylglucosamine 1-carboxyvinyltransferase from Orientia tsutsugamushi (strain Ikeda) (Rickettsia tsutsugamushi).